Consider the following 735-residue polypeptide: MWRVLFLLSGLGGLRMDSNFDSLPVQITVPEKIRSIIKEGIESQASYKIVIEGKPYTVNLMQKNFLPHNFRVYSYSGTGIMKPLDQDFQNFCHYQGYIEGYPKSVVMVSTCTGLRGVLQFENVSYGIEPLESSVGFEHVIYQVKHKKADVSLYNEKDIESRDLSFKLQSVEPQQDFAKYIEMHVIVEKQLYNHMGSDTTVVAQKVFQLIGLTNAIFVSFNITIILSSLELWIDENKIATTGEANELLHTFLRWKTSYLVLRPHDVAFLLVYREKSNYVGATFQGKMCDANYAGGVVLHPRTISLESLAVILAQLLSLSMGITYDDINKCQCSGAVCIMNPEAIHFSGVKIFSNCSFEDFAHFISKQKSQCLHNQPRLDPFFKQQAVCGNAKLEAGEECDCGTEQDCALIGETCCDIATCRFKAGSNCAEGPCCENCLFMSKERMCRPSFEECDLPEYCNGSSASCPENHYVQTGHPCGLNQWICIDGVCMSGDKQCTDTFGKEVEFGPSECYSHLNSKTDVSGNCGISDSGYTQCEADNLQCGKLICKYVGKFLLQIPRATIIYANISGHLCIAVEFASDHADSQKMWIKDGTSCGSNKVCRNQRCVSSSYLGYDCTTDKCNDRGVCNNKKHCHCSASYLPPDCSVQSDLWPGGSIDSGNFPPVAIPARLPERRYIENIYHSKPMRWPFFLFIPFFIIFCVLIAIMVKVNFQRKKWRTEDYSSDEQPESESEPKG.

The first 16 residues, 1-16 (MWRVLFLLSGLGGLRM), serve as a signal peptide directing secretion. A propeptide spanning residues 17 to 174 (DSNFDSLPVQ…FKLQSVEPQQ (158 aa)) is cleaved from the precursor. Residues Asn-122 and Asn-220 are each glycosylated (N-linked (GlcNAc...) asparagine). Residues 175–686 (DFAKYIEMHV…ENIYHSKPMR (512 aa)) are Extracellular-facing. Residues 178-375 (KYIEMHVIVE…QKSQCLHNQP (198 aa)) enclose the Peptidase M12B domain. 4 disulfides stabilise this stretch: Cys-287-Cys-370, Cys-329-Cys-354, Cys-331-Cys-336, and Cys-445-Cys-465. N-linked (GlcNAc...) asparagine glycosylation is found at Asn-353, Asn-459, and Asn-566. Positions 384–473 (QAVCGNAKLE…SCPENHYVQT (90 aa)) constitute a Disintegrin domain. One can recognise an EGF-like domain in the interval 612-645 (LGYDCTTDKCNDRGVCNNKKHCHCSASYLPPDCS). Disulfide bonds link Cys-616–Cys-627, Cys-621–Cys-633, and Cys-635–Cys-644. A helical transmembrane segment spans residues 687–707 (WPFFLFIPFFIIFCVLIAIMV). At 708-735 (KVNFQRKKWRTEDYSSDEQPESESEPKG) the chain is on the cytoplasmic side. Ser-729 bears the Phosphoserine mark.

In terms of processing, the prodomain and the metalloprotease domain are cleaved during the epididymal maturation of the spermatozoa. As to expression, expressed specifically in spermatogenic cells in the seminiferous cells. Not detected in fetal tissues.

Its subcellular location is the membrane. Functionally, sperm surface membrane protein that may be involved in sperm-egg plasma membrane adhesion and fusion during fertilization. Could have a direct role in sperm-zona binding or migration of sperm from the uterus into the oviduct. Interactions with egg membrane could be mediated via binding between its disintegrin-like domain to one or more integrins receptors on the egg. This is a non catalytic metalloprotease-like protein. The chain is Disintegrin and metalloproteinase domain-containing protein 2 (ADAM2) from Homo sapiens (Human).